Here is a 210-residue protein sequence, read N- to C-terminus: Na(+)-translocating NADH-quinone reductase subunit D (210 aa).

The next 6 membrane-spanning stretches (helical) occupy residues 14-34, 42-62, 72-92, 103-123, 131-151, and 178-198; these read PIVN…ALAV, LVMA…ISMI, IIVQ…LLQA, VFVG…AYAM, FMDG…VGFV, and NGLL…IWII.

Belongs to the NqrDE/RnfAE family. In terms of assembly, composed of six subunits; NqrA, NqrB, NqrC, NqrD, NqrE and NqrF.

It localises to the cell inner membrane. The catalysed reaction is a ubiquinone + n Na(+)(in) + NADH + H(+) = a ubiquinol + n Na(+)(out) + NAD(+). Functionally, NQR complex catalyzes the reduction of ubiquinone-1 to ubiquinol by two successive reactions, coupled with the transport of Na(+) ions from the cytoplasm to the periplasm. NqrA to NqrE are probably involved in the second step, the conversion of ubisemiquinone to ubiquinol. This is Na(+)-translocating NADH-quinone reductase subunit D from Shewanella oneidensis (strain ATCC 700550 / JCM 31522 / CIP 106686 / LMG 19005 / NCIMB 14063 / MR-1).